Consider the following 249-residue polypeptide: Vesicle-associated membrane protein-associated protein A (249 aa).

Ala-2 bears the N-acetylalanine mark. At 2 to 227 (ASASGTMAKH…VSFRENVTSP (226 aa)) the chain is on the cytoplasmic side. The MSP domain maps to 14 to 131 (ILVLDPPTDL…MDSKLRCVFE (118 aa)). The interval 50 to 53 (KVKT) is phosphorylated FFAT motif binding. Position 125 is an N6-acetyllysine (Lys-125). Position 166 is a phosphoserine (Ser-166). The stretch at 169–205 (DTETRKLVEECKRLQGEMMKLSEENRLLRDEGLRLRK) forms a coiled coil. Residue Thr-170 is modified to Phosphothreonine. Phosphoserine occurs at positions 214, 216, and 219. Residues 228-248 (LPSLLVVIAAIFIGFFLGKFI) traverse the membrane as a helical; Anchor for type IV membrane protein segment.

It belongs to the VAMP-associated protein (VAP) (TC 9.B.17) family. As to quaternary structure, homodimer; disulfide-linked. Heterodimer with VAPB. Interacts with VAMP1, VAMP2, STX1A, BET1, SEC22C and with the C-terminal domain of OCLN. Interacts (via MSP domain) with OSBPL1A (via FFAT motif). Interacts (via MSP domain) with ZFYVE27; may retain ZFYVE27 in the endoplasmic reticulum and regulate its function in cell projections formation. Interacts with OSBP. Interacts (via C-terminus) with RSAD2/viperin (via C-terminus). Interacts with IFITM3. Interacts with OSBPL3 (phosphorylated form). Interacts with KIF5A in a ZFYVE27-dependent manner. Interacts (via MSP domain) with STARD3 (via phosphorylated FFAT motif); this interaction recruits VAPA to the endosome. Interacts with STARD3NL (via FFAT motif). Interacts with CERT1. Interacts with PLEKHA3 and SACM1L to form a ternary complex. Interacts with VPS13A (via FFAT motif). Interacts with RB1CC1 (via phosphorylated FFAT motif), MIGA2 (via phosphorylated FFAT motif), RMDN3 (via phosphorylated FFAT motif), KCNB1 (via phosphorylated FFAT motif) and KCNB2 (via phosphorylated FFAT motif). Interacts (via MSP domain) with WDR44 (via FFAT-like motif); the interactions connect the endoplasmic reticulum (ER) with the endosomal tubule.

The protein localises to the endoplasmic reticulum membrane. It localises to the cell junction. The protein resides in the tight junction. It is found in the cell membrane. Its function is as follows. Endoplasmic reticulum (ER)-anchored protein that mediates the formation of contact sites between the ER and endosomes via interaction with FFAT motif-containing proteins such as STARD3 or WDR44. STARD3-VAPA interaction enables cholesterol transfer from the ER to endosomes. Via interaction with WDR44 participates in neosynthesized protein export. In addition, recruited to the plasma membrane through OSBPL3 binding. The OSBPL3-VAPA complex stimulates RRAS signaling which in turn attenuates integrin beta-1 (ITGB1) activation at the cell surface. With OSBPL3, may regulate ER morphology. May play a role in vesicle trafficking. The chain is Vesicle-associated membrane protein-associated protein A from Bos taurus (Bovine).